Consider the following 911-residue polypeptide: MSAEQKQGGTELAPRYDAKLVEDEYYQYWMDGGFYRAPIVEGKQPYTIVIPPPNVTGTLHLGHALNNTMIDILIRWKRMQGHPTLYLPGTDHAGLATQIRVEEDLRKSGGPTRHELGREAFVAKVWDWKERYHATITSQLRKLGVSVDWSREAFTMDERLSRAVRAFFVQLYKKGLIYQGTRITHWCPKDQTALSDIEVEYEERQGHMWHFRYPLADGSGSIVIATTRPETMLGDTAVAVNPEDERYKHLVGKMLRHPATGREIPIIADEYVDPAFGTGCVKITPFHDPNDFEIGLRHGLEMPQVIGPKGEMTEAAGKYAGLDRYECRRRIVADAEAEGWLVKVEEHQHAVGCCARCGTVIEPLISRQWYVKMKPLAEPAIRAVESGQIKIVPERFTKVYLHWMENIQDWCISRQIWWGHRIPVWYCDDCGHLTVSETDPTRCEKCGSANIRQDEDALDTWFSSALWPFSTLGWPDDTADLRYFFPTDVLVTGYDILFFWVARMIFSSLELTGKIPFHTVVLHGLVRDAQGRKMSKSLGNGVDPIDVIDQYGTDALRFMLVTGSSPGNDIRFHTERVENARNFANKLWNASRFVLMNLADWQPAAEGAALQYDVADRWIRHRFNEAARAVNELLGEYQYGEAARTIYDFIWSEFCDWYIELVKPRLYNPADPTRAAAQETLARVLEGTLRLLHPFMPYITEAIWQKLPLRSPQVETAPEIARAAGRDALPPSISVTAYPTPVEGWADAEANERMALIIDTIRALRSIRAEFRLGEHTRIDAVVMATSDQALAILNEGRAFIENLGKTGQLTIQPVAEAKPKNAAAAVVTGAEIYVPLGGLIDLPKEIERLTKELTTTGDELAKLEKKLSNEGFLTKAKPEVVEKTREEAAALAEKRQALENRLAMLRSMQG.

The short motif at 53–63 is the 'HIGH' region element; it reads PNVTGTLHLGH. The 'KMSKS' region signature appears at 533–537; sequence KMSKS. An ATP-binding site is contributed by K536. The stretch at 845 to 910 forms a coiled coil; sequence KEIERLTKEL…NRLAMLRSMQ (66 aa).

It belongs to the class-I aminoacyl-tRNA synthetase family. ValS type 1 subfamily. In terms of assembly, monomer.

The protein resides in the cytoplasm. It carries out the reaction tRNA(Val) + L-valine + ATP = L-valyl-tRNA(Val) + AMP + diphosphate. Functionally, catalyzes the attachment of valine to tRNA(Val). As ValRS can inadvertently accommodate and process structurally similar amino acids such as threonine, to avoid such errors, it has a 'posttransfer' editing activity that hydrolyzes mischarged Thr-tRNA(Val) in a tRNA-dependent manner. The sequence is that of Valine--tRNA ligase from Symbiobacterium thermophilum (strain DSM 24528 / JCM 14929 / IAM 14863 / T).